Here is a 239-residue protein sequence, read N- to C-terminus: Small ribosomal subunit protein uS2 (239 aa).

This sequence belongs to the universal ribosomal protein uS2 family.

This is Small ribosomal subunit protein uS2 from Histophilus somni (strain 129Pt) (Haemophilus somnus).